The following is a 304-amino-acid chain: Quinolinate synthase (304 aa).

The iminosuccinate site is built by His24 and Ser41. Position 86 (Cys86) interacts with [4Fe-4S] cluster. Residues Tyr112–Asn114 and Ser129 contribute to the iminosuccinate site. Residue Cys171 coordinates [4Fe-4S] cluster. Iminosuccinate contacts are provided by residues His197–Glu199 and Thr214. Cys259 is a binding site for [4Fe-4S] cluster.

This sequence belongs to the quinolinate synthase family. Type 2 subfamily. Requires [4Fe-4S] cluster as cofactor.

It localises to the cytoplasm. The catalysed reaction is iminosuccinate + dihydroxyacetone phosphate = quinolinate + phosphate + 2 H2O + H(+). It participates in cofactor biosynthesis; NAD(+) biosynthesis; quinolinate from iminoaspartate: step 1/1. In terms of biological role, catalyzes the condensation of iminoaspartate with dihydroxyacetone phosphate to form quinolinate. The protein is Quinolinate synthase of Geobacter sp. (strain M21).